Here is a 376-residue protein sequence, read N- to C-terminus: Queuine tRNA-ribosyltransferase (376 aa).

Asp93 functions as the Proton acceptor in the catalytic mechanism. Residues 93-97 (DSGGF), Asp147, Gln190, and Gly217 contribute to the substrate site. The tract at residues 248–254 (GVGKPDD) is RNA binding. The Nucleophile role is filled by Asp267. Residues Cys305, Cys307, Cys310, and His336 each coordinate Zn(2+).

This sequence belongs to the queuine tRNA-ribosyltransferase family. In terms of assembly, homodimer. Within each dimer, one monomer is responsible for RNA recognition and catalysis, while the other monomer binds to the replacement base PreQ1. Zn(2+) is required as a cofactor.

The enzyme catalyses 7-aminomethyl-7-carbaguanine + guanosine(34) in tRNA = 7-aminomethyl-7-carbaguanosine(34) in tRNA + guanine. The protein operates within tRNA modification; tRNA-queuosine biosynthesis. Its function is as follows. Catalyzes the base-exchange of a guanine (G) residue with the queuine precursor 7-aminomethyl-7-deazaguanine (PreQ1) at position 34 (anticodon wobble position) in tRNAs with GU(N) anticodons (tRNA-Asp, -Asn, -His and -Tyr). Catalysis occurs through a double-displacement mechanism. The nucleophile active site attacks the C1' of nucleotide 34 to detach the guanine base from the RNA, forming a covalent enzyme-RNA intermediate. The proton acceptor active site deprotonates the incoming PreQ1, allowing a nucleophilic attack on the C1' of the ribose to form the product. After dissociation, two additional enzymatic reactions on the tRNA convert PreQ1 to queuine (Q), resulting in the hypermodified nucleoside queuosine (7-(((4,5-cis-dihydroxy-2-cyclopenten-1-yl)amino)methyl)-7-deazaguanosine). The chain is Queuine tRNA-ribosyltransferase from Ruegeria pomeroyi (strain ATCC 700808 / DSM 15171 / DSS-3) (Silicibacter pomeroyi).